A 119-amino-acid polypeptide reads, in one-letter code: Large ribosomal subunit protein bL19 (119 aa).

Belongs to the bacterial ribosomal protein bL19 family.

Its function is as follows. This protein is located at the 30S-50S ribosomal subunit interface and may play a role in the structure and function of the aminoacyl-tRNA binding site. In Treponema denticola (strain ATCC 35405 / DSM 14222 / CIP 103919 / JCM 8153 / KCTC 15104), this protein is Large ribosomal subunit protein bL19.